The primary structure comprises 238 residues: tRNA (guanine-N(7)-)-methyltransferase (238 aa).

S-adenosyl-L-methionine contacts are provided by glutamate 68, glutamate 93, aspartate 120, and aspartate 143. Aspartate 143 is a catalytic residue. Residues lysine 147, aspartate 179, and 216–219 (TKFE) contribute to the substrate site.

It belongs to the class I-like SAM-binding methyltransferase superfamily. TrmB family.

The enzyme catalyses guanosine(46) in tRNA + S-adenosyl-L-methionine = N(7)-methylguanosine(46) in tRNA + S-adenosyl-L-homocysteine. The protein operates within tRNA modification; N(7)-methylguanine-tRNA biosynthesis. In terms of biological role, catalyzes the formation of N(7)-methylguanine at position 46 (m7G46) in tRNA. The protein is tRNA (guanine-N(7)-)-methyltransferase of Shewanella putrefaciens (strain CN-32 / ATCC BAA-453).